Reading from the N-terminus, the 440-residue chain is Xylose isomerase (440 aa).

Residues His101 and Asp104 contribute to the active site. The Mg(2+) site is built by Glu232, Glu268, His271, Asp296, Asp307, Asp309, and Asp339.

It belongs to the xylose isomerase family. As to quaternary structure, homotetramer. Mg(2+) is required as a cofactor.

Its subcellular location is the cytoplasm. The catalysed reaction is alpha-D-xylose = alpha-D-xylulofuranose. The sequence is that of Xylose isomerase from Salmonella paratyphi B (strain ATCC BAA-1250 / SPB7).